Reading from the N-terminus, the 154-residue chain is uncharacterized protein (154 aa).

Positions 1-33 (MTKRGIQAFAGGIILATAVLAAVFYLTDEDQAA) are cleaved as a signal peptide.

This is an uncharacterized protein from Bacillus subtilis (strain 168).